Here is a 322-residue protein sequence, read N- to C-terminus: Acetylglutamate kinase (322 aa).

Substrate contacts are provided by residues 89–90, Arg-111, and Asn-217; that span reads GG.

It belongs to the acetylglutamate kinase family. ArgB subfamily.

It is found in the cytoplasm. The catalysed reaction is N-acetyl-L-glutamate + ATP = N-acetyl-L-glutamyl 5-phosphate + ADP. Its pathway is amino-acid biosynthesis; L-arginine biosynthesis; N(2)-acetyl-L-ornithine from L-glutamate: step 2/4. Functionally, catalyzes the ATP-dependent phosphorylation of N-acetyl-L-glutamate. This is Acetylglutamate kinase from Ehrlichia ruminantium (strain Gardel).